The chain runs to 604 residues: Glutamine--fructose-6-phosphate aminotransferase [isomerizing] (604 aa).

Residue cysteine 2 is the Nucleophile; for GATase activity of the active site. Residues 2 to 216 (CGIVGYVGFR…DGDVVRLTRE (215 aa)) enclose the Glutamine amidotransferase type-2 domain. 2 consecutive SIS domains span residues 281–420 (LALD…GRGA) and 453–594 (VAEK…VDQP). Lysine 599 serves as the catalytic For Fru-6P isomerization activity.

As to quaternary structure, homodimer.

It localises to the cytoplasm. The catalysed reaction is D-fructose 6-phosphate + L-glutamine = D-glucosamine 6-phosphate + L-glutamate. Functionally, catalyzes the first step in hexosamine metabolism, converting fructose-6P into glucosamine-6P using glutamine as a nitrogen source. This chain is Glutamine--fructose-6-phosphate aminotransferase [isomerizing], found in Thermus thermophilus (strain ATCC 27634 / DSM 579 / HB8).